Consider the following 329-residue polypeptide: Epoxide hydrolase (329 aa).

Residues 35 to 308 form the AB hydrolase-1 domain; it reads PAVLFCHGFP…DNVGHWVQHE (274 aa). The Nucleophile role is filled by aspartate 111. The Proton donor role is filled by tyrosine 242. The active-site Proton acceptor is the histidine 303.

The protein belongs to the AB hydrolase superfamily. Epoxide hydrolase family. As to quaternary structure, homodimer.

The catalysed reaction is an epoxide + H2O = an ethanediol. The enzyme catalyses (R)-styrene oxide + H2O = (R)-styrene glycol. It catalyses the reaction (S)-styrene oxide + H2O = (S)-styrene glycol. It carries out the reaction 3,4-epoxy-1-cyclohexene + H2O = cyclohex-3-ene-1,2-diol. In terms of biological role, catalyzes the hydrolysis of various epoxides into diols. In vitro, shows the strongest activity toward aromatic and cyclic aliphatic epoxide compounds, since it shows strong activity toward (R)-styrene oxide, (S)-styrene oxide, and 3,4-epoxy-1-cyclohexene, but very weak activity toward (R)-epichlorohydrin, (S)-epichlorohydrin, and 1,2-epoxy-9-decene. The chain is Epoxide hydrolase from Caballeronia sordidicola (Burkholderia sordidicola).